The following is a 132-amino-acid chain: MAVTDPIGDLITRIRNAQMRRKDKTSTPGSRLRASVLEVLRSEGYIRGFTATDHGNGRTEFEIELKYFDGVPVIREIARVSKPGRRVYASVKNLPRVANGLGIAVVSTPQGVMADHEARDKNVGGEVLCTVF.

This sequence belongs to the universal ribosomal protein uS8 family. In terms of assembly, part of the 30S ribosomal subunit. Contacts proteins S5 and S12.

Functionally, one of the primary rRNA binding proteins, it binds directly to 16S rRNA central domain where it helps coordinate assembly of the platform of the 30S subunit. The protein is Small ribosomal subunit protein uS8 of Xanthobacter autotrophicus (strain ATCC BAA-1158 / Py2).